We begin with the raw amino-acid sequence, 155 residues long: MLP-like protein 423 (155 aa).

This sequence belongs to the MLP family.

The protein is MLP-like protein 423 (MLP423) of Arabidopsis thaliana (Mouse-ear cress).